Here is a 221-residue protein sequence, read N- to C-terminus: Large ribosomal subunit protein uL4 (221 aa).

The segment at 47–77 (GTASTKTRGEVSGGGRKPWIQKHTGRARQGS) is disordered.

Belongs to the universal ribosomal protein uL4 family. In terms of assembly, part of the 50S ribosomal subunit.

In terms of biological role, one of the primary rRNA binding proteins, this protein initially binds near the 5'-end of the 23S rRNA. It is important during the early stages of 50S assembly. It makes multiple contacts with different domains of the 23S rRNA in the assembled 50S subunit and ribosome. Functionally, forms part of the polypeptide exit tunnel. The polypeptide is Large ribosomal subunit protein uL4 (Thermosipho melanesiensis (strain DSM 12029 / CIP 104789 / BI429)).